Reading from the N-terminus, the 432-residue chain is MLLSKYFLPILKEEPSEAKVISHKLMLRSGMIMKQAAGLYTWLPLGLKVLKNIENVVRSNMNKVGALEVLMPCIQPAHLWIESGRFEHYGKEMLKFQDRHDNTLLFGPTNEDMITDIFRRNIKSYKDLPKNLYHIQWKFRDEIRPRFGVMRGREFLMKDAYSFDINQKNAVNTYNKMYKAYMNTFRDLGVFAIPVIADNGPIGGNLSHEFHIVAETGESTIYYDKRFKILKDNPDIDVEEIKGWYAAAEEKHDVNKLSSFPEGITRSKGIEVGHIFYIGSKYSVNMNALINDEYGKLIPVEMSSYGIGISRLAAAIIEANCDKKGIIWPCSVAPFKVSLINLNIHDNKCVELAAKTDKELSHQNIEVLYDDTDARPGSKFATHDLIGSPYQIIIGPKKAANNIVELKDRKTGVLEDIEVENIINYIKNIDSI.

Belongs to the class-II aminoacyl-tRNA synthetase family. ProS type 2 subfamily. Homodimer.

It localises to the cytoplasm. It carries out the reaction tRNA(Pro) + L-proline + ATP = L-prolyl-tRNA(Pro) + AMP + diphosphate. In terms of biological role, catalyzes the attachment of proline to tRNA(Pro) in a two-step reaction: proline is first activated by ATP to form Pro-AMP and then transferred to the acceptor end of tRNA(Pro). The protein is Proline--tRNA ligase of Rickettsia prowazekii (strain Madrid E).